The following is a 362-amino-acid chain: Heat-inducible transcription repressor HrcA (362 aa).

Belongs to the HrcA family.

Negative regulator of class I heat shock genes (grpE-dnaK-dnaJ and groELS operons). Prevents heat-shock induction of these operons. In Rhizobium etli (strain CIAT 652), this protein is Heat-inducible transcription repressor HrcA.